Here is a 450-residue protein sequence, read N- to C-terminus: UDP-N-acetylmuramoylalanine--D-glutamate ligase (450 aa).

Residue 119–125 coordinates ATP; sequence GSNGKTT.

This sequence belongs to the MurCDEF family.

It is found in the cytoplasm. The catalysed reaction is UDP-N-acetyl-alpha-D-muramoyl-L-alanine + D-glutamate + ATP = UDP-N-acetyl-alpha-D-muramoyl-L-alanyl-D-glutamate + ADP + phosphate + H(+). It participates in cell wall biogenesis; peptidoglycan biosynthesis. In terms of biological role, cell wall formation. Catalyzes the addition of glutamate to the nucleotide precursor UDP-N-acetylmuramoyl-L-alanine (UMA). The protein is UDP-N-acetylmuramoylalanine--D-glutamate ligase of Bacillus anthracis (strain A0248).